Consider the following 271-residue polypeptide: Transmembrane protein 150A (271 aa).

The Cytoplasmic portion of the chain corresponds to 1 to 2; that stretch reads MT. A helical membrane pass occupies residues 3–23; sequence AWILLPVSLSAFSITGIWTVY. At 24 to 75 the chain is on the extracellular side; that stretch reads AMAVMNRHVCPVENWSYNESCSPDPAEQGGPKSCCTLDDVPLISKCGTYPPE. N-linked (GlcNAc...) asparagine glycans are attached at residues Asn-37 and Asn-41. The chain crosses the membrane as a helical span at residues 76-96; sequence SCLFSLIGNMGAVMVALICLL. The Cytoplasmic segment spans residues 97-108; it reads RYGQLLEQSRHS. The chain crosses the membrane as a helical span at residues 109-129; the sequence is WINTTALITGCTNAAGLVVVG. Over 130 to 140 the chain is Extracellular; it reads NFQVDHAKSLH. A helical transmembrane segment spans residues 141-161; that stretch reads YIGTGVAFTAGLLFVCLHCVL. At 162 to 178 the chain is on the cytoplasmic side; it reads FYHGATTPLDMAMAYLR. Residues 179–199 form a helical membrane-spanning segment; that stretch reads SVLAVIAFITLVLSGVFFLHE. Topologically, residues 200–211 are extracellular; the sequence is SSQLQHGAALCE. The chain crosses the membrane as a helical span at residues 212–232; the sequence is WVFVLDILIFYGTFSYEFGTI. Topologically, residues 233 to 271 are cytoplasmic; that stretch reads SSDTLVAALQPAPGRACKSSGSSSTSTHLNCAPESIAMI.

This sequence belongs to the DRAM/TMEM150 family. As to quaternary structure, interacts (via C-terminal cytoplasmic tail) with PI4KA.

The protein resides in the cell membrane. Functionally, regulates localization of phosphatidylinositol 4-kinase (PI4K) to the plasma membrane, possibly by reducing the association of TTC7 (TTC7A or TTC7B) with the PI4K complex. Acts as a regulator of phosphatidylinositol 4-phosphate (PtdIns(4)P) synthesis. May also play a role in fasting-induced catabolism. The polypeptide is Transmembrane protein 150A (Tmem150a) (Mus musculus (Mouse)).